A 746-amino-acid polypeptide reads, in one-letter code: Exostosin-1 (746 aa).

Residues 1–7 (MQAKKRY) lie on the Cytoplasmic side of the membrane. A helical; Signal-anchor for type II membrane protein membrane pass occupies residues 8-28 (FILLSAGSCLALLFYFGGLQF). The Lumenal segment spans residues 29–746 (RASRSHSRRE…RKKYRDIERL (718 aa)). An N-linked (GlcNAc...) asparagine glycan is attached at Asn89. Disulfide bonds link Cys98–Cys103 and Cys109–Cys152. A protein-binding residues include Leu166 and Tyr203. UDP contacts are provided by Lys267, Lys269, Tyr271, and Arg280. Cys298 and Cys312 form a disulfide bridge. His300 lines the a protein pocket. UDP is bound by residues Tyr319 and Tyr324. Asn330 is a glycosylation site (N-linked (GlcNAc...) asparagine). Disulfide bonds link Cys334-Cys355 and Cys652-Cys704. Positions 346 and 349 each coordinate UDP.

Belongs to the glycosyltransferase 47 family. Part of the heparan sulfate polymerase, a dimeric complex composed of EXT1 and EXT2. Could also form homooligomeric complexes. Interacts with NDST1. N-glycosylated.

It localises to the golgi apparatus membrane. The protein localises to the golgi apparatus. Its subcellular location is the cis-Golgi network membrane. The protein resides in the endoplasmic reticulum membrane. It carries out the reaction 3-O-{alpha-D-GlcNAc-[(1-&gt;4)-beta-D-GlcA-(1-&gt;4)-alpha-D-GlcNAc](n)-(1-&gt;4)-beta-D-GlcA-(1-&gt;3)-beta-D-Gal-(1-&gt;3)-beta-D-Gal-(1-&gt;4)-beta-D-Xyl}-L-seryl-[protein] + UDP-alpha-D-glucuronate = 3-O-{[(1-&gt;4)-beta-D-GlcA-(1-&gt;4)-alpha-D-GlcNAc](n+1)-(1-&gt;4)-beta-D-GlcA-(1-&gt;3)-beta-D-Gal-(1-&gt;3)-beta-D-Gal-(1-&gt;4)-beta-D-Xyl}-L-seryl-[protein] + UDP + H(+). The protein operates within protein modification; protein glycosylation. Its function is as follows. Glycosyltransferase forming with EXT2 the heterodimeric heparan sulfate polymerase which catalyzes the elongation of the heparan sulfate glycan backbone. Glycan backbone extension consists in the alternating transfer of (1-&gt;4)-beta-D-GlcA and (1-&gt;4)-alpha-D-GlcNAc residues from their respective UDP-sugar donors. Both EXT1 and EXT2 are required for the full activity of the polymerase since EXT1 bears the N-acetylglucosaminyl-proteoglycan 4-beta-glucuronosyltransferase activity within the complex while EXT2 carries the glucuronosyl-N-acetylglucosaminyl-proteoglycan 4-alpha-N-acetylglucosaminyltransferase activity. Heparan sulfate proteoglycans are ubiquitous components of the extracellular matrix and play an important role in tissue homeostasis and signaling. This chain is Exostosin-1 (EXT1), found in Papio anubis (Olive baboon).